The following is a 252-amino-acid chain: Insulin-induced gene 1 protein (252 aa).

Residues 1 to 59 (MPRLESGAWSCSCAARARHAARPGEAAPKADAMQSPSPSAGRAEREASGGSATTWRQHL) are Cytoplasmic-facing. The segment at 22–48 (RPGEAAPKADAMQSPSPSAGRAEREAS) is disordered. A helical membrane pass occupies residues 60–82 (VQRSVVLFVVGAFMALVLNLLQI). The Extracellular segment spans residues 83–101 (QRNVTLFPDEVIATLFSSA). Residues 102-119 (WWVPPCCGTAAAVVGLLY) form a helical membrane-spanning segment. Over 120–134 (PCIDSHLGEPHKFKR) the chain is Cytoplasmic. The chain crosses the membrane as a helical span at residues 135–157 (EWASVMRCIAVFVGINHASAKLD). The Extracellular portion of the chain corresponds to 158-160 (FAN). The helical transmembrane segment at 161-179 (NVQLSLTLAALSLGLWWTF) threads the bilayer. At 180–184 (DRSRS) the chain is on the cytoplasmic side. The chain crosses the membrane as a helical span at residues 185–206 (GLGLGITIAFVATLITQFLVYN). The Extracellular segment spans residues 207–220 (GVYQYTSPDFLYIR). Residues 221 to 238 (SWLPCIFFSGGVTVGNIG) form a helical membrane-spanning segment. Topologically, residues 239 to 252 (RQLAMGIPEKPHND) are cytoplasmic. The KxHxx signature appears at 246-252 (PEKPHND).

It belongs to the INSIG family. Interacts with SCAP; interaction is direct and only takes place in the presence of sterols; it prevents interaction between SCAP and the coat protein complex II (COPII). Associates with the SCAP-SREBP complex; association is mediated via its interaction with SCAP and only takes place in the presence of sterols.

Its subcellular location is the endoplasmic reticulum membrane. In terms of biological role, oxysterol-binding protein that mediates feedback control of cholesterol synthesis by controlling both endoplasmic reticulum to Golgi transport of SCAP and degradation of HMGCR. Acts as a negative regulator of cholesterol biosynthesis by mediating the retention of the SCAP-SREBP complex in the endoplasmic reticulum, thereby blocking the processing of sterol regulatory element-binding proteins (SREBPs). Binds oxysterol, including 25-hydroxycholesterol, regulating interaction with SCAP and retention of the SCAP-SREBP complex in the endoplasmic reticulum. In presence of oxysterol, interacts with SCAP, retaining the SCAP-SREBP complex in the endoplasmic reticulum, thereby preventing SCAP from escorting SREBPs to the Golgi. Sterol deprivation reduces oxysterol-binding, disrupting the interaction between INSIG1 and SCAP, thereby promoting Golgi transport of the SCAP-SREBP complex, followed by processing and nuclear translocation of SREBPs. Also regulates cholesterol synthesis by regulating degradation of HMGCR. This is Insulin-induced gene 1 protein from Gallus gallus (Chicken).